We begin with the raw amino-acid sequence, 391 residues long: Alpha-2B adrenergic receptor (391 aa).

Residues 1 to 25 (AIAAVITFLILFTIFGNALVILAVL) traverse the membrane as a helical segment. Residues 26-36 (TSRSLRAPQNL) lie on the Cytoplasmic side of the membrane. A helical membrane pass occupies residues 37 to 62 (FLVSLAAADILVATLIIPFSLANELL). The Extracellular segment spans residues 63–72 (GYWYFRRTWC). Cysteine 72 and cysteine 151 are disulfide-bonded. Residues 73 to 95 (EVYLALDVLFCTSSIVHLCAISL) traverse the membrane as a helical segment. The Cytoplasmic portion of the chain corresponds to 96 to 117 (DRYWAVSRALEYNSKRTPRRIK). Residues 118 to 140 (CIILTVWLIAAVISLPPLIYKGD) traverse the membrane as a helical segment. Residues 141–156 (QGPQPRGRPQCKLNQE) are Extracellular-facing. Residues 157–180 (AWYILASSIGSFFAPCLIMILVYL) traverse the membrane as a helical segment. The Cytoplasmic portion of the chain corresponds to 181–355 (RIYLIAKRSH…LTREKRFTFV (175 aa)). 2 disordered regions span residues 194–218 (PRAK…APSS) and 233–312 (EANR…PLQQ). Basic and acidic residues predominate over residues 233–247 (EANRHSKSTGEKVEG). Residues 256-266 (PGVPPSWPPLP) show a composition bias toward pro residues. Positions 271-281 (GQEEDIYRASP) are enriched in basic and acidic residues. Residues 282–294 (EEEAGDDEEEECE) show a composition bias toward acidic residues. A compositionally biased stretch (low complexity) spans 295–309 (PQAVPVSPASACSPP). Residues 356–379 (LAVVIGVFVLCWFPFFFSYSLGAI) form a helical membrane-spanning segment. Over 380–388 (CPQHCKVPH) the chain is Extracellular. Residues 389–391 (GLF) form a helical membrane-spanning segment.

This sequence belongs to the G-protein coupled receptor 1 family. Adrenergic receptor subfamily. ADRA2B sub-subfamily. In terms of assembly, interacts with RAB26. Interacts with PPP1R9B. Interacts with GGA1, GGA2 and GGA3.

The protein resides in the cell membrane. Alpha-2 adrenergic receptors mediate the catecholamine-induced inhibition of adenylate cyclase through the action of G proteins. In Erinaceus europaeus (Western European hedgehog), this protein is Alpha-2B adrenergic receptor (ADRA2B).